The sequence spans 801 residues: Mitochondrial intermediate peptidase (801 aa).

The transit peptide at 1–41 (MKPQLLTPLRRRPWTCRQCLQRLQRLQQQTRRSFETAASPA) directs the protein to the mitochondrion. The tract at residues 31 to 54 (RRSFETAASPAPGHTQVDYIPADA) is disordered. His-565 contacts Zn(2+). The active site involves Glu-566. Positions 569 and 572 each coordinate Zn(2+).

It belongs to the peptidase M3 family. Requires Zn(2+) as cofactor.

It is found in the mitochondrion matrix. The enzyme catalyses Release of an N-terminal octapeptide as second stage of processing of some proteins imported into the mitochondrion.. Its function is as follows. Cleaves proteins, imported into the mitochondrion, to their mature size. While most mitochondrial precursor proteins are processed to the mature form in one step by mitochondrial processing peptidase (MPP), the sequential cleavage by MIP of an octapeptide after initial processing by MPP is a required step for a subgroup of nuclear-encoded precursor proteins destined for the matrix or the inner membrane. This is Mitochondrial intermediate peptidase (oct1) from Aspergillus clavatus (strain ATCC 1007 / CBS 513.65 / DSM 816 / NCTC 3887 / NRRL 1 / QM 1276 / 107).